An 84-amino-acid polypeptide reads, in one-letter code: Delta-stichotoxin-Shd3a (84 aa).

Residues 1 to 19 form the signal peptide; that stretch reads MAYLKIVLVALMLVLGVSA. The propeptide occupies 20-33; the sequence is MRLSDQEDQDVSVV. 3 disulfides stabilise this stretch: Cys38/Cys78, Cys40/Cys68, and Cys61/Cys79. Lys83 carries the lysine amide modification.

This sequence belongs to the sea anemone sodium channel inhibitory toxin family. Type II subfamily.

The protein resides in the secreted. Its subcellular location is the nematocyst. In terms of biological role, binds specifically to voltage-gated sodium channels (Nav), thereby delaying their inactivation during signal transduction. In Stichodactyla haddoni (Saddle carpet anemone), this protein is Delta-stichotoxin-Shd3a.